A 49-amino-acid chain; its full sequence is Large ribosomal subunit protein bL33A (49 aa).

It belongs to the bacterial ribosomal protein bL33 family.

In Geobacillus kaustophilus (strain HTA426), this protein is Large ribosomal subunit protein bL33A.